The sequence spans 23 residues: Basic phospholipase A2 homolog CTs-K49c (23 aa).

Contains 7 disulfide bonds. As to expression, expressed by the venom gland.

The protein resides in the secreted. Functionally, snake venom phospholipase A2 homolog that lacks catalytic activity. Shows myotoxic activities. Induces local edema a few hours after injection (5-10 ug) in the hind paw. The chain is Basic phospholipase A2 homolog CTs-K49c from Trimeresurus stejnegeri (Chinese green tree viper).